The following is a 282-amino-acid chain: MSGLRTLLGLGLLVAGSRLPRIASRQSVCRAGPIWWGTQHRSSETMASAAVKYLSQEEAQAVDEELFNEYQFSVDQLMELAGLSCATAIAKAYPPTSMSKSPPTVLVICGPGNNGGDGLVCARHLKLFGYQPTIYYPKRPNKPLFTGLVTQCQKMDIPFLGEMPPEPMMVDELYELVVDAIFGFSFKGDVREPFHSILSVLSGLTVPIASIDIPSGWDVEKGNPSGIQPDLLISLTAPKKSATQFTGRYHYLGGRFVPPALEKKYQLNLPAYPDTECVYRLQ.

Residues Met1–Tyr53 constitute a mitochondrion transit peptide. A YjeF N-terminal domain is found at Ala59–Leu269. Asn113–Asp117 provides a ligand contact to (6S)-NADPHX. Asn114 lines the K(+) pocket. Residue Lys138 is modified to N6-succinyllysine. Asp179 serves as a coordination point for K(+). (6S)-NADPHX is bound by residues Gly183–Asp189 and Asp212. Residue Ser215 coordinates K(+).

It belongs to the NnrE/AIBP family. As to quaternary structure, homodimer. Interacts with APOA1 and APOA2. The cofactor is K(+). Undergoes physiological phosphorylation during sperm capacitation, downstream to PKA activation.

It is found in the mitochondrion. The protein resides in the secreted. The catalysed reaction is (6R)-NADHX = (6S)-NADHX. It catalyses the reaction (6R)-NADPHX = (6S)-NADPHX. Functionally, catalyzes the epimerization of the S- and R-forms of NAD(P)HX, a damaged form of NAD(P)H that is a result of enzymatic or heat-dependent hydration. This is a prerequisite for the S-specific NAD(P)H-hydrate dehydratase to allow the repair of both epimers of NAD(P)HX. Accelerates cholesterol efflux from endothelial cells to high-density lipoprotein (HDL) and thereby regulates angiogenesis. The protein is NAD(P)H-hydrate epimerase of Rattus norvegicus (Rat).